The sequence spans 844 residues: Protein translocase subunit SecA (844 aa).

Residues glutamine 87, 105–109, and aspartate 495 contribute to the ATP site; that span reads GEGKT. The segment covering 783 to 800 has biased composition (basic and acidic residues); it reads QAPPEELKQEFKHKEEPK. The segment at 783-844 is disordered; sequence QAPPEELKQE…GQKYKKCCGA (62 aa). Residues 802-811 show a composition bias toward polar residues; it reads LNYSGAQKET. Residues 816–826 show a composition bias toward basic and acidic residues; sequence PERRGEPKVGR. Zn(2+) contacts are provided by cysteine 830, cysteine 832, cysteine 841, and cysteine 842.

It belongs to the SecA family. As to quaternary structure, monomer and homodimer. Part of the essential Sec protein translocation apparatus which comprises SecA, SecYEG and auxiliary proteins SecDF-YajC and YidC. Requires Zn(2+) as cofactor.

Its subcellular location is the cell inner membrane. It is found in the cytoplasm. The enzyme catalyses ATP + H2O + cellular proteinSide 1 = ADP + phosphate + cellular proteinSide 2.. Functionally, part of the Sec protein translocase complex. Interacts with the SecYEG preprotein conducting channel. Has a central role in coupling the hydrolysis of ATP to the transfer of proteins into and across the cell membrane, serving as an ATP-driven molecular motor driving the stepwise translocation of polypeptide chains across the membrane. The polypeptide is Protein translocase subunit SecA (Nitratidesulfovibrio vulgaris (strain DSM 19637 / Miyazaki F) (Desulfovibrio vulgaris)).